The sequence spans 89 residues: Small ribosomal subunit protein uS15 (89 aa).

Belongs to the universal ribosomal protein uS15 family. As to quaternary structure, part of the 30S ribosomal subunit. Forms a bridge to the 50S subunit in the 70S ribosome, contacting the 23S rRNA.

One of the primary rRNA binding proteins, it binds directly to 16S rRNA where it helps nucleate assembly of the platform of the 30S subunit by binding and bridging several RNA helices of the 16S rRNA. In terms of biological role, forms an intersubunit bridge (bridge B4) with the 23S rRNA of the 50S subunit in the ribosome. The sequence is that of Small ribosomal subunit protein uS15 from Corynebacterium efficiens (strain DSM 44549 / YS-314 / AJ 12310 / JCM 11189 / NBRC 100395).